Here is a 134-residue protein sequence, read N- to C-terminus: Cytochrome b5 (134 aa).

Ala-2 is subject to N-acetylalanine. Lys-7, Lys-10, and Lys-19 each carry N6-acetyllysine. In terms of domain architecture, Cytochrome b5 heme-binding spans 9-85 (VKYYTLEEIQ…SKTFIIGELH (77 aa)). Heme is bound by residues His-44 and His-68. Residues 109 to 131 (WWTNWLIPAISALFVALIYHLYT) traverse the membrane as a helical segment.

Belongs to the cytochrome b5 family.

The protein localises to the endoplasmic reticulum membrane. It localises to the microsome membrane. Its function is as follows. Cytochrome b5 is a membrane-bound hemoprotein functioning as an electron carrier for several membrane-bound oxygenases. This is Cytochrome b5 (CYB5A) from Bos taurus (Bovine).